Here is a 616-residue protein sequence, read N- to C-terminus: UvrABC system protein C (616 aa).

The region spanning 12–91 (ESPGVYLWKD…IKEYHPRFNI (80 aa)) is the GIY-YIG domain. The UVR domain maps to 202 to 237 (SDVMHHVRERMLDASERLDFERAAELRDALAHLEKM).

Belongs to the UvrC family. In terms of assembly, interacts with UvrB in an incision complex.

The protein resides in the cytoplasm. The UvrABC repair system catalyzes the recognition and processing of DNA lesions. UvrC both incises the 5' and 3' sides of the lesion. The N-terminal half is responsible for the 3' incision and the C-terminal half is responsible for the 5' incision. The chain is UvrABC system protein C from Gemmatimonas aurantiaca (strain DSM 14586 / JCM 11422 / NBRC 100505 / T-27).